We begin with the raw amino-acid sequence, 492 residues long: Ribose import ATP-binding protein RbsA (492 aa).

ABC transporter domains follow at residues 3–239 (IDMR…VGRK) and 238–492 (RKLE…TGGK). 35-42 (GENGAGKS) is a binding site for ATP.

The protein belongs to the ABC transporter superfamily. Ribose importer (TC 3.A.1.2.1) family. As to quaternary structure, the complex is composed of an ATP-binding protein (RbsA), two transmembrane proteins (RbsC) and a solute-binding protein (RbsB).

The protein resides in the cell membrane. It carries out the reaction D-ribose(out) + ATP + H2O = D-ribose(in) + ADP + phosphate + H(+). In terms of biological role, part of the ABC transporter complex RbsABC involved in ribose import. Responsible for energy coupling to the transport system. The protein is Ribose import ATP-binding protein RbsA of Streptococcus agalactiae serotype III (strain NEM316).